The primary structure comprises 258 residues: Imidazole glycerol phosphate synthase subunit HisF (258 aa).

Catalysis depends on residues Asp11 and Asp130.

The protein belongs to the HisA/HisF family. In terms of assembly, heterodimer of HisH and HisF.

The protein localises to the cytoplasm. The enzyme catalyses 5-[(5-phospho-1-deoxy-D-ribulos-1-ylimino)methylamino]-1-(5-phospho-beta-D-ribosyl)imidazole-4-carboxamide + L-glutamine = D-erythro-1-(imidazol-4-yl)glycerol 3-phosphate + 5-amino-1-(5-phospho-beta-D-ribosyl)imidazole-4-carboxamide + L-glutamate + H(+). Its pathway is amino-acid biosynthesis; L-histidine biosynthesis; L-histidine from 5-phospho-alpha-D-ribose 1-diphosphate: step 5/9. IGPS catalyzes the conversion of PRFAR and glutamine to IGP, AICAR and glutamate. The HisF subunit catalyzes the cyclization activity that produces IGP and AICAR from PRFAR using the ammonia provided by the HisH subunit. This chain is Imidazole glycerol phosphate synthase subunit HisF, found in Escherichia fergusonii (strain ATCC 35469 / DSM 13698 / CCUG 18766 / IAM 14443 / JCM 21226 / LMG 7866 / NBRC 102419 / NCTC 12128 / CDC 0568-73).